The chain runs to 352 residues: Bifunctional protein FolD 1, mitochondrial (352 aa).

Residues M1–D23 constitute a mitochondrion transit peptide.

This sequence belongs to the tetrahydrofolate dehydrogenase/cyclohydrolase family. In terms of assembly, homodimer.

The protein resides in the mitochondrion. The catalysed reaction is (6R)-5,10-methylene-5,6,7,8-tetrahydrofolate + NADP(+) = (6R)-5,10-methenyltetrahydrofolate + NADPH. It carries out the reaction (6R)-5,10-methenyltetrahydrofolate + H2O = (6R)-10-formyltetrahydrofolate + H(+). Its pathway is one-carbon metabolism; tetrahydrofolate interconversion. Its function is as follows. Catalyzes the oxidation of 5,10-methylenetetrahydrofolate to 5,10-methenyltetrahydrofolate and then the hydrolysis of 5,10-methenyltetrahydrofolate to 10-formyltetrahydrofolate. The sequence is that of Bifunctional protein FolD 1, mitochondrial (FOLD1) from Arabidopsis thaliana (Mouse-ear cress).